Here is a 453-residue protein sequence, read N- to C-terminus: Aspartate aminotransferase, chloroplastic (453 aa).

The N-terminal 44 residues, 1–44, are a transit peptide targeting the chloroplast; that stretch reads MASLMLSLGSTSLLPREINKDKLKLGTSASNPFLKAKSFSRVTM. Positions 85, 181, and 234 each coordinate L-aspartate. At Lys298 the chain carries N6-(pyridoxal phosphate)lysine. Arg427 serves as a coordination point for L-aspartate.

The protein belongs to the class-I pyridoxal-phosphate-dependent aminotransferase family. In terms of assembly, homodimer. The cofactor is pyridoxal 5'-phosphate.

The protein localises to the plastid. Its subcellular location is the chloroplast. It is found in the amyloplast. The catalysed reaction is L-aspartate + 2-oxoglutarate = oxaloacetate + L-glutamate. Amino acid aminotransferase important for the metabolism of amino acids and Krebs-cycle related organic acids. No activity with D-Asp or D-Ala as amino donors. In plants, it is involved in nitrogen metabolism and in aspects of carbon and energy metabolism. This is Aspartate aminotransferase, chloroplastic (ASP5) from Arabidopsis thaliana (Mouse-ear cress).